A 123-amino-acid chain; its full sequence is UPF0382 membrane protein YwdK (123 aa).

4 helical membrane passes run Val-3 to Ala-23, Ala-49 to Thr-69, Ala-71 to Val-91, and Ile-96 to Val-116.

It belongs to the UPF0382 family.

The protein localises to the cell membrane. In Bacillus subtilis (strain 168), this protein is UPF0382 membrane protein YwdK (ywdK).